Here is a 254-residue protein sequence, read N- to C-terminus: Probable 2,4-dienoyl-CoA reductase [(2E)-enoyl-CoA-producing] (254 aa).

Residue 6-38 coordinates NADP(+); the sequence is VIITGGSSGMGKAMAKKQAELGWHVMVTGRNHE. Thr100 provides a ligand contact to substrate. The active-site Proton acceptor is the Tyr142. Lys157 lines the NAD(+) pocket.

It belongs to the short-chain dehydrogenases/reductases (SDR) family. 2,4-dienoyl-CoA reductase subfamily.

The catalysed reaction is a 4,5-saturated-(2E)-enoyl-CoA + NADP(+) = a (2E,4E)-dienoyl-CoA + NADPH + H(+). The enzyme catalyses a (2E,4Z)-dienoyl-CoA + NADPH + H(+) = a 4,5-saturated-(2E)-enoyl-CoA + NADP(+). The protein operates within lipid metabolism; fatty acid beta-oxidation. In terms of biological role, auxiliary enzyme of beta-oxidation. It participates in the metabolism of unsaturated fatty enoyl-CoA esters having double bonds in both even- and odd-numbered positions. Catalyzes the NADP-dependent reduction of 2,4-dienoyl-CoA to yield trans-3-enoyl-CoA. In Bacillus subtilis (strain 168), this protein is Probable 2,4-dienoyl-CoA reductase [(2E)-enoyl-CoA-producing] (fadH).